The chain runs to 863 residues: Phycobiliprotein ApcE (863 aa).

(2R,3E)-phycocyanobilin is bound at residue Cys178. PBS-linker domains are found at residues 235–414, 473–652, and 671–852; these read DLQG…RFQK, PIEN…KLQP, and NNII…FILM.

The protein belongs to the phycobilisome linker protein family. Contains one covalently linked bilin chromophore. This protein autochromophorylates (Potential).

It localises to the plastid. It is found in the chloroplast thylakoid membrane. This protein is postulated to act both as terminal energy acceptor and as a linker polypeptide that stabilizes the phycobilisome architecture. May have intrinsic bilin lyase activity. The chain is Phycobiliprotein ApcE (apcE) from Galdieria sulphuraria (Red alga).